The sequence spans 479 residues: Ribosomal RNA small subunit methyltransferase F (479 aa).

Residues 125-131 (AAAPGSK), E149, D176, and D194 contribute to the S-adenosyl-L-methionine site. C247 acts as the Nucleophile in catalysis.

This sequence belongs to the class I-like SAM-binding methyltransferase superfamily. RsmB/NOP family.

It is found in the cytoplasm. The catalysed reaction is cytidine(1407) in 16S rRNA + S-adenosyl-L-methionine = 5-methylcytidine(1407) in 16S rRNA + S-adenosyl-L-homocysteine + H(+). In terms of biological role, specifically methylates the cytosine at position 1407 (m5C1407) of 16S rRNA. The polypeptide is Ribosomal RNA small subunit methyltransferase F (Escherichia coli (strain UTI89 / UPEC)).